The following is a 328-amino-acid chain: G2/mitotic-specific cyclin-2 (328 aa).

This sequence belongs to the cyclin family. Cyclin AB subfamily. Interacts with the CDC2 protein kinase to form a serine/threonine kinase holoenzyme complex also known as maturation promoting factor (MPF). The cyclin subunit imparts substrate specificity to the complex. Only expressed in organs with dividing cells.

Its function is as follows. Essential for the control of the cell cycle at the G2/M (mitosis) transition. The protein is G2/mitotic-specific cyclin-2 of Medicago sativa (Alfalfa).